The primary structure comprises 809 residues: Phenylalanine--tRNA ligase beta subunit (809 aa).

The region spanning 39 to 152 is the tRNA-binding domain; the sequence is KDKWPNVYVG…ADAPVGMLAS (114 aa). One can recognise a B5 domain in the interval 404–492; sequence KDRNSVVLSL…RIAGYDTIPC (89 aa). 4 residues coordinate Mg(2+): aspartate 470, aspartate 476, glutamate 479, and glutamate 480. Positions 717–808 constitute an FDX-ACB domain; that stretch reads NRFPSVERDL…LNTETGAVLR (92 aa).

The protein belongs to the phenylalanyl-tRNA synthetase beta subunit family. Type 1 subfamily. Tetramer of two alpha and two beta subunits. Requires Mg(2+) as cofactor.

The protein resides in the cytoplasm. The enzyme catalyses tRNA(Phe) + L-phenylalanine + ATP = L-phenylalanyl-tRNA(Phe) + AMP + diphosphate + H(+). The chain is Phenylalanine--tRNA ligase beta subunit from Dehalococcoides mccartyi (strain ATCC BAA-2266 / KCTC 15142 / 195) (Dehalococcoides ethenogenes (strain 195)).